Here is a 176-residue protein sequence, read N- to C-terminus: Pituitary adenylate cyclase-activating polypeptide (176 aa).

The N-terminal stretch at 1–24 (MTMCSGARLALLVYGIIMHSSVYC) is a signal peptide. Positions 25–80 (SPAAAGLRFPGIRPEDEAYDEDGNPLQDFYDSDPPGVGGPASTLRDAYALYYPAEE) are excised as a propeptide. An important for receptor binding region spans residues 150-158 (VKKYLAAVL). The residue at position 158 (Leu-158) is a Leucine amide. Residue Lys-169 is modified to Lysine amide. A propeptide spanning residues 173-176 (IAYL) is cleaved from the precursor.

Belongs to the glucagon family.

It localises to the secreted. Functionally, PACAP is a neuropeptide involved in diverse array of physiological processes through activating the PACAP subfamily of class B1 G protein-coupled receptors: VIP receptor 1 (VIPR1), VIP receptor 2 (VIPR2), and PACAP type I receptor (ADCYAP1R1). Exerts neuroprotective and general cytoprotective effects due to anti-apoptotic, anti-inflammatory, and antioxidant actions. Promotes neuron projection development through the RAPGEF2/Rap1/B-Raf/ERK pathway. In chromaffin cells, induces long-lasting increase of intracellular calcium concentrations and neuroendocrine secretion. Involved in the control of glucose homeostasis, induces insulin secretion by pancreatic beta cells. PACAP exists in two bioactive forms from proteolysis of the same precursor protein, PACAP27 and PACAP38, which differ by eleven amino acid residues in the C-terminus. This Sus scrofa (Pig) protein is Pituitary adenylate cyclase-activating polypeptide (ADCYAP1).